Here is a 106-residue protein sequence, read N- to C-terminus: MAPTQLDIKVKALKRLTKEEGYYQQELKDQEAHVAKLKEDKSVDPYDLKKQEEVLDDTKRLLPTLYEKIREFKEDLEQFLKTYQGTEDVSDARSAITSAQELLDSK.

Serine 94 is subject to Phosphoserine.

It belongs to the TBCA family.

The protein resides in the cytoplasm. The protein localises to the cytoskeleton. Tubulin-folding protein; involved in the early step of the tubulin folding pathway. The polypeptide is Tubulin-specific chaperone A (RBL2) (Saccharomyces cerevisiae (strain ATCC 204508 / S288c) (Baker's yeast)).